A 191-amino-acid chain; its full sequence is Small t antigen (191 aa).

At M1 the chain carries N-acetylmethionine; by host. In terms of domain architecture, J spans Q12 to W80. A C4-type; atypical zinc finger spans residues C117–C130. An H1C3-type; atypical zinc finger spans residues H136–C157.

In terms of assembly, interacts with host PPP2R1A; the interaction inhibits PP2A activity.

It localises to the host cytoplasm. The protein localises to the host nucleus. In terms of biological role, promotes efficient viral genome replication by accelerating both G1 and S phase progression of the cell cycle. Inhibits host PP2A by binding to the A subunit, thereby displacing lower affinity regulatory B subunit. Inactivation of PP2A in turn results in the transactivation of cyclin A and cyclin D1 promoters. Late during the infection cycle, ST may induce dephosphorylation of host MTOR, leading to the inhibition of cap-dependent translation. May establish and maintain high levels of viral genomes during persistent infection in cell culture. The sequence is that of Small t antigen from Homo sapiens (Human).